The following is a 508-amino-acid chain: Octopamine receptor beta-1R (508 aa).

At 1–111 (MTLLQRLQAM…SHLALVFVKC (111 aa)) the chain is on the extracellular side. A helical transmembrane segment spans residues 112-132 (FIIGFIILAAILGNMLVIVSV). Over 133-139 (MRHRKLR) the chain is Cytoplasmic. A helical transmembrane segment spans residues 140 to 160 (IITNYFVVSLAVADMLVALCA). Residues 161 to 186 (MTFNASVMISGKWMFGSVMCDMWNSF) are Extracellular-facing. Asn-164 is a glycosylation site (N-linked (GlcNAc...) asparagine). A helical transmembrane segment spans residues 187–209 (DVYFSTASIMHLCCISVDRYYAI). The Cytoplasmic segment spans residues 210 to 223 (VQPLDYPLIMTQRR). The chain crosses the membrane as a helical span at residues 224-244 (VFIMLLMVWLSPALLSFLPIC). The Extracellular segment spans residues 245–270 (SGWYTTTENYKYLKSNPHICEFKVNK). A helical membrane pass occupies residues 271–291 (AYAIVSSSMSFWIPGIVMLSM). Over 292 to 351 (YYRIYQEADRQERLVYRSKVAALLLEKHLQISQIPKPRPSIQVEQSTISTMRRERKAART) the chain is Cytoplasmic. A helical transmembrane segment spans residues 352–372 (LGIIMSAFLICWLPFFLWYIV). Residues 373-383 (SSLCDSCITPR) lie on the Extracellular side of the membrane. A helical transmembrane segment spans residues 384-404 (LLVGILFWIGYFNSALNPIIY). The Cytoplasmic portion of the chain corresponds to 405 to 508 (AYFNRDFRAA…MQQLHPLYTN (104 aa)). The tract at residues 440-464 (RDLEFGGPSRRGTNGAQRTGSGSAE) is disordered. Over residues 450-461 (RGTNGAQRTGSG) the composition is skewed to polar residues.

This sequence belongs to the G-protein coupled receptor 1 family. As to expression, in the adult, expressed in the superior protocerebrum and the optic lobe medulla of the central nervous system, nurse cells of egg chambers in the ovary at oogenic stages 1-10, and spermatogonia and spermatocytes in the testis. Expressed in embryonic and larval ventral nerve cord and brain lobe, and the larval imaginal disk and larval salivary gland. Also expressed in larval synaptic boutons and retinal cells in the optic disk.

The protein resides in the cell membrane. In terms of biological role, autoreceptor for octopamine, which is a neurotransmitter, neurohormone, and neuromodulator in invertebrates. Negatively regulates synaptic growth by activating the inhibitory G protein Galphao and limiting cAMP production. Antagonizes the action of Octbeta2R which stimulates synaptic growth. The sequence is that of Octopamine receptor beta-1R from Drosophila melanogaster (Fruit fly).